Reading from the N-terminus, the 160-residue chain is uncharacterized protein (160 aa).

A helical membrane pass occupies residues 1–21 (MSIQTLIIISIVIFILWLTFT).

This sequence belongs to the IIV-6 203L/325L family.

It localises to the membrane. This is an uncharacterized protein from Invertebrate iridescent virus 6 (IIV-6).